The chain runs to 750 residues: Photosystem I P700 chlorophyll a apoprotein A1 (750 aa).

Helical transmembrane passes span 70–93 (VFSA…FHGA), 156–179 (LYCT…FHYH), 195–219 (LNHH…HVSL), 291–309 (IAHH…GHMY), 346–369 (WHAQ…HHMY), 385–411 (LSLF…IFMV), 433–455 (AIIS…LYIH), and 531–549 (FLVH…LILL). [4Fe-4S] cluster is bound by residues cysteine 573 and cysteine 582. 2 helical membrane-spanning segments follow: residues 589 to 610 (HVFL…HFSW) and 664 to 686 (LSAY…MFLF). Position 675 (histidine 675) interacts with chlorophyll a'. Methionine 683 and tyrosine 691 together coordinate chlorophyll a. Tryptophan 692 is a binding site for phylloquinone. The helical transmembrane segment at 724–744 (AVGVTHYLLGGIATTWAFFLA) threads the bilayer.

The protein belongs to the PsaA/PsaB family. In terms of assembly, the PsaA/B heterodimer binds the P700 chlorophyll special pair and subsequent electron acceptors. PSI consists of a core antenna complex that captures photons, and an electron transfer chain that converts photonic excitation into a charge separation. The eukaryotic PSI reaction center is composed of at least 11 subunits. Requires P700 is a chlorophyll a/chlorophyll a' dimer, A0 is one or more chlorophyll a, A1 is one or both phylloquinones and FX is a shared 4Fe-4S iron-sulfur center. as cofactor.

Its subcellular location is the plastid. It is found in the chloroplast thylakoid membrane. The catalysed reaction is reduced [plastocyanin] + hnu + oxidized [2Fe-2S]-[ferredoxin] = oxidized [plastocyanin] + reduced [2Fe-2S]-[ferredoxin]. In terms of biological role, psaA and PsaB bind P700, the primary electron donor of photosystem I (PSI), as well as the electron acceptors A0, A1 and FX. PSI is a plastocyanin-ferredoxin oxidoreductase, converting photonic excitation into a charge separation, which transfers an electron from the donor P700 chlorophyll pair to the spectroscopically characterized acceptors A0, A1, FX, FA and FB in turn. Oxidized P700 is reduced on the lumenal side of the thylakoid membrane by plastocyanin. The polypeptide is Photosystem I P700 chlorophyll a apoprotein A1 (Nymphaea alba (White water-lily)).